We begin with the raw amino-acid sequence, 187 residues long: Large ribosomal subunit protein uL5 (187 aa).

The protein belongs to the universal ribosomal protein uL5 family. In terms of assembly, part of the 50S ribosomal subunit; part of the 5S rRNA/L5/L18/L25 subcomplex. Contacts the 5S rRNA and the P site tRNA. Forms a bridge to the 30S subunit in the 70S ribosome.

In terms of biological role, this is one of the proteins that bind and probably mediate the attachment of the 5S RNA into the large ribosomal subunit, where it forms part of the central protuberance. In the 70S ribosome it contacts protein S13 of the 30S subunit (bridge B1b), connecting the 2 subunits; this bridge is implicated in subunit movement. Contacts the P site tRNA; the 5S rRNA and some of its associated proteins might help stabilize positioning of ribosome-bound tRNAs. In Mycolicibacterium smegmatis (strain ATCC 700084 / mc(2)155) (Mycobacterium smegmatis), this protein is Large ribosomal subunit protein uL5.